The primary structure comprises 413 residues: Serine hydroxymethyltransferase (413 aa).

(6S)-5,6,7,8-tetrahydrofolate is bound by residues L117 and 121-123 (GHL). K226 bears the N6-(pyridoxal phosphate)lysine mark. (6S)-5,6,7,8-tetrahydrofolate-binding positions include E239 and 349–351 (SPF).

Belongs to the SHMT family. In terms of assembly, homodimer. Pyridoxal 5'-phosphate serves as cofactor.

Its subcellular location is the cytoplasm. It carries out the reaction (6R)-5,10-methylene-5,6,7,8-tetrahydrofolate + glycine + H2O = (6S)-5,6,7,8-tetrahydrofolate + L-serine. The protein operates within one-carbon metabolism; tetrahydrofolate interconversion. It participates in amino-acid biosynthesis; glycine biosynthesis; glycine from L-serine: step 1/1. Its function is as follows. Catalyzes the reversible interconversion of serine and glycine with tetrahydrofolate (THF) serving as the one-carbon carrier. This reaction serves as the major source of one-carbon groups required for the biosynthesis of purines, thymidylate, methionine, and other important biomolecules. Also exhibits THF-independent aldolase activity toward beta-hydroxyamino acids, producing glycine and aldehydes, via a retro-aldol mechanism. The polypeptide is Serine hydroxymethyltransferase (Bacillus anthracis (strain A0248)).